A 179-amino-acid polypeptide reads, in one-letter code: Probable splicing factor, arginine/serine-rich 6 (179 aa).

An RRM domain is found at 3 to 76 (AKVYVGGLPS…VRARVELSTG (74 aa)). The disordered stretch occupies residues 75-179 (TGQRRGGGGR…RSRSRSASPH (105 aa)). Over residues 78–93 (RRGGGGRGGGFGGRGG) the composition is skewed to gly residues. Over residues 94-160 (GGRDRSPYRG…RSPQERDRSH (67 aa)) the composition is skewed to basic and acidic residues. Basic residues predominate over residues 161-173 (SKSRSRSRSRSRS).

Belongs to the splicing factor SR family. Extensively phosphorylated on serine residues in the RS domain.

It is found in the nucleus. Functionally, plays a functionally redundant role in shifting germ cell sexual differentiation in hermaprodites. Required for the development of somatic gonad structures and for progression from larval stage to adulthood. This is Probable splicing factor, arginine/serine-rich 6 (rsp-6) from Caenorhabditis elegans.